The chain runs to 263 residues: Hydroxyethylthiazole kinase (263 aa).

Residue methionine 45 coordinates substrate. The ATP site is built by arginine 121 and serine 167. A substrate-binding site is contributed by glycine 194.

The protein belongs to the Thz kinase family. Requires Mg(2+) as cofactor.

It catalyses the reaction 5-(2-hydroxyethyl)-4-methylthiazole + ATP = 4-methyl-5-(2-phosphooxyethyl)-thiazole + ADP + H(+). It participates in cofactor biosynthesis; thiamine diphosphate biosynthesis; 4-methyl-5-(2-phosphoethyl)-thiazole from 5-(2-hydroxyethyl)-4-methylthiazole: step 1/1. Its function is as follows. Catalyzes the phosphorylation of the hydroxyl group of 4-methyl-5-beta-hydroxyethylthiazole (THZ). The sequence is that of Hydroxyethylthiazole kinase from Vibrio parahaemolyticus serotype O3:K6 (strain RIMD 2210633).